The primary structure comprises 213 residues: Orotate phosphoribosyltransferase (213 aa).

Lysine 26 lines the 5-phospho-alpha-D-ribose 1-diphosphate pocket. 34–35 is an orotate binding site; sequence FF. Residues 72-73, arginine 99, lysine 100, lysine 103, histidine 105, and 124-132 each bind 5-phospho-alpha-D-ribose 1-diphosphate; these read YK and DDVITAGTA. Threonine 128 and arginine 156 together coordinate orotate.

Belongs to the purine/pyrimidine phosphoribosyltransferase family. PyrE subfamily. As to quaternary structure, homodimer. Requires Mg(2+) as cofactor.

The enzyme catalyses orotidine 5'-phosphate + diphosphate = orotate + 5-phospho-alpha-D-ribose 1-diphosphate. It functions in the pathway pyrimidine metabolism; UMP biosynthesis via de novo pathway; UMP from orotate: step 1/2. In terms of biological role, catalyzes the transfer of a ribosyl phosphate group from 5-phosphoribose 1-diphosphate to orotate, leading to the formation of orotidine monophosphate (OMP). This Pseudomonas aeruginosa (strain UCBPP-PA14) protein is Orotate phosphoribosyltransferase.